A 100-amino-acid chain; its full sequence is Integration host factor subunit alpha 2 (100 aa).

The protein belongs to the bacterial histone-like protein family. Heterodimer of an alpha and a beta chain.

In terms of biological role, this protein is one of the two subunits of integration host factor, a specific DNA-binding protein that functions in genetic recombination as well as in transcriptional and translational control. In Dechloromonas aromatica (strain RCB), this protein is Integration host factor subunit alpha 2.